Consider the following 324-residue polypeptide: Phospho-N-acetylmuramoyl-pentapeptide-transferase (324 aa).

The next 10 membrane-spanning stretches (helical) occupy residues 9 to 29 (TFAV…PFLV), 53 to 73 (TMGA…FSFI), 77 to 97 (VSAA…LGFL), 117 to 137 (FLGQ…NDFA), 147 to 167 (IEVD…VGFS), 176 to 196 (LDGL…VIAF), 201 to 221 (MDVA…LLFN), 227 to 247 (IFMG…ISIL), 253 to 273 (LLLL…LQVF), and 304 to 324 (VLTF…VVIF).

The protein belongs to the glycosyltransferase 4 family. MraY subfamily. Mg(2+) is required as a cofactor.

The protein resides in the cell membrane. It carries out the reaction UDP-N-acetyl-alpha-D-muramoyl-L-alanyl-gamma-D-glutamyl-meso-2,6-diaminopimeloyl-D-alanyl-D-alanine + di-trans,octa-cis-undecaprenyl phosphate = di-trans,octa-cis-undecaprenyl diphospho-N-acetyl-alpha-D-muramoyl-L-alanyl-D-glutamyl-meso-2,6-diaminopimeloyl-D-alanyl-D-alanine + UMP. It functions in the pathway cell wall biogenesis; peptidoglycan biosynthesis. Catalyzes the initial step of the lipid cycle reactions in the biosynthesis of the cell wall peptidoglycan: transfers peptidoglycan precursor phospho-MurNAc-pentapeptide from UDP-MurNAc-pentapeptide onto the lipid carrier undecaprenyl phosphate, yielding undecaprenyl-pyrophosphoryl-MurNAc-pentapeptide, known as lipid I. This is Phospho-N-acetylmuramoyl-pentapeptide-transferase from Listeria monocytogenes serovar 1/2a (strain ATCC BAA-679 / EGD-e).